The sequence spans 146 residues: MTSSIYGFITLSVVALISQTTCRSLDLLLDGDFNNGLASFDGSSKWSRLPLEFLAAFDLDPHQAQGQHLAEAPEAPLMEAMKRSRGPSPRRLRSYLRRAAGLRGMKRKMFWQPLGYMPASARAHNNVPEVVNENSQDSGTNVFRYG.

An N-terminal signal peptide occupies residues 1-24 (MTSSIYGFITLSVVALISQTTCRS). Propeptides lie at residues 25–80 (LDLL…LMEA) and 92–146 (LRSY…FRYG).

Neuron L5.

The protein resides in the secreted. May have important functions in renal physiology and in animal behavior, as does bradykinin. The sequence is that of Bradykinin-like neuropeptide (LUQ-1) from Aplysia californica (California sea hare).